The following is a 398-amino-acid chain: O-methyltransferase hmp5 (398 aa).

S-adenosyl-L-methionine-binding positions include 233–234 (GG), glutamate 261, and 283–284 (DF). The Proton acceptor role is filled by histidine 303.

This sequence belongs to the class I-like SAM-binding methyltransferase superfamily. Cation-independent O-methyltransferase family.

Its pathway is secondary metabolite biosynthesis. Functionally, O-methyltransferase; part of the gene cluster that mediates the biosynthesis of hypothemycin, a resorcylic acid lactone (RAL) that irreversibly inhibits a subset of protein kinases with a conserved cysteine in the ATP binding site such as human ERK2. The first step is performed by both PKSs hmp3 and hmp8 and leads to the production of 7',8'-dehydrozearalenol (DHZ). The highly reducing PKS hpm8 synthesizes the reduced hexaketide (7S,11S,2E,8E)-7,11-dihydroxy-dodeca-2,8-dienoate, which is transferred downstream to the non-reducing PKS hpm3. Hpm3 then extends the reduced hexaketide to a nonaketide, after which regioselective cyclization and macrolactonization affords DHZ. The next step is the conversion of DHZ into aigialomycin C and is performed by the O-methyltransferase hmp5, the FAD-binding monooxygenase hmp7, and the cytochrome P450 monooxygenase hmp1. The wide substrate tolerance of the hmp5 and hmp7 implies that the reactions from DHZ to aigialomycin C can occur in any order. The steps from aigialomycin C to hypothemycin are less well established. The FAD-linked oxidoreductase hmp9 presumably catalyzes oxidation of the C-6' hydroxyl to a ketone. The timing of this oxidation is important, since the resulting enone functional group is a Michael acceptor that can react spontaneously with glutathione, an abundant metabolite in fungal cells. The glutathione S-transferase hmp2 catalyzes cis-trans isomerization of the 7',8' double bond with equilibrium favoring the trans isomer. The hpm6-encoded transporter might preferentially pump hypothemycin out of the cell relative to the trans isomer aigialomycin A. The cis-to-trans isomerization may be coupled with C-4' hydroxylation, since all known hypothemycin analogs containing the enone functional group also have hydroxyl groups at both C-4' and C-5'. The chain is O-methyltransferase hmp5 from Hypomyces subiculosus (Nectria subiculosa).